Here is a 549-residue protein sequence, read N- to C-terminus: Cation/acetate symporter ActP (549 aa).

The next 13 helical transmembrane spans lie at 33–53, 77–97, 103–123, 148–168, 183–203, 206–226, 262–282, 303–323, 355–375, 404–424, 428–448, 464–484, and 493–513; these read WQAIIMFLIFVVFTLGITYWA, LAIAGDYMSAASFLGISALVF, GLIYSLGFLVGWPIILFLIAE, ILSACGSLVVVALYLIAQMVG, IAVVLVGVLMMMYVLFGGMLA, WVQIIKAVLLLFGASFMAFMV, ISALSLGLGLMFGTAGLPHIL, GFMGYFYILTFIIGFGAIMLV, LFLGFISAVAFATILAVVAGL, VSKITVLILGVIAIILGVLFE, IAFMVGLAFAIAASCNFPIIL, GGWLGLITAVVLMILGPTIWV, and IFPYEYPALFSITVAFLGIWF.

Belongs to the sodium:solute symporter (SSF) (TC 2.A.21) family.

It is found in the cell inner membrane. Its function is as follows. Transports acetate. The polypeptide is Cation/acetate symporter ActP (Escherichia coli (strain ATCC 8739 / DSM 1576 / NBRC 3972 / NCIMB 8545 / WDCM 00012 / Crooks)).